The following is a 702-amino-acid chain: Cell adhesion molecule CEACAM5 (702 aa).

A signal peptide spans 1–34 (MESPSAPPHRWCIPWQRLLLTASLLTFWNPPTTA). Residues 35-144 (KLTIESTPFN…TGQFRVYPEL (110 aa)) form the Ig-like V-type domain. Residues Asn-104, Asn-115, Asn-152, Asn-182, Asn-197, Asn-204, Asn-208, Asn-246, Asn-256, Asn-274, Asn-288, Asn-292, Asn-309, Asn-330, Asn-351, Asn-360, Asn-375, Asn-432, Asn-466, Asn-480, Asn-508, Asn-529, Asn-553, Asn-560, Asn-580, Asn-612, Asn-650, and Asn-665 are each glycosylated (N-linked (GlcNAc...) asparagine). Ig-like C2-type domains lie at 145-232 (PKPS…VILN), 240-315 (PTIS…TVTT), 323-410 (PKPF…VILN), 418-495 (PTIS…KTIT), 501-588 (PKPS…VTLD), and 593-675 (PDTP…ITVS). Cys-167 and Cys-215 form a disulfide bridge. Cys-259 and Cys-299 are joined by a disulfide. A disulfide bridge links Cys-345 with Cys-393. Cys-437 and Cys-477 are oxidised to a cystine. An intrachain disulfide couples Cys-523 to Cys-571. A disulfide bond links Cys-615 and Cys-655. Ala-685 is lipidated: GPI-anchor amidated alanine. A propeptide spans 686-702 (GATVGIMIGVLVGVALI) (removed in mature form).

The protein belongs to the immunoglobulin superfamily. CEA family. Homodimer. Post-translationally, complex immunoreactive glycoprotein with a MW of 180 kDa comprising 60% carbohydrate. As to expression, expressed in columnar epithelial and goblet cells of the colon (at protein level). Found in adenocarcinomas of endodermally derived digestive system epithelium and fetal colon.

Its subcellular location is the cell membrane. The protein localises to the apical cell membrane. The protein resides in the cell surface. In terms of biological role, cell surface glycoprotein that plays a role in cell adhesion, intracellular signaling and tumor progression. Mediates homophilic and heterophilic cell adhesion with other carcinoembryonic antigen-related cell adhesion molecules, such as CEACAM6. Plays a role as an oncogene by promoting tumor progression; induces resistance to anoikis of colorectal carcinoma cells. Its function is as follows. (Microbial infection) Receptor for E.coli Dr adhesins. Binding of E.coli Dr adhesins leads to dissociation of the homodimer. The chain is Cell adhesion molecule CEACAM5 from Homo sapiens (Human).